The following is a 230-amino-acid chain: MSKYAAIPSPYSHQPQAPDHKSKTLVVGLTGGIGSGKSAASNWFAQQGIDIIDADVIAHEVVVKGSATLRKIQRKFGDWVLNINGDMDRAAVRTHVFTYPDALIELEAITHPAIREAAKLQLAESTSPYVVLSAPLLIEAAEAGLANLCQRILVMDATEDTQLARASQRDALSVQKIKAIMVNQLSREERNLHADDVVLNENDLAALYAQLEPLHQDYLKLAQQLKFAAD.

Residues 1-20 (MSKYAAIPSPYSHQPQAPDH) form a disordered region. One can recognise a DPCK domain in the interval 26 to 225 (VVGLTGGIGS…QDYLKLAQQL (200 aa)). Position 34 to 39 (34 to 39 (GSGKSA)) interacts with ATP.

This sequence belongs to the CoaE family.

The protein resides in the cytoplasm. It catalyses the reaction 3'-dephospho-CoA + ATP = ADP + CoA + H(+). Its pathway is cofactor biosynthesis; coenzyme A biosynthesis; CoA from (R)-pantothenate: step 5/5. Its function is as follows. Catalyzes the phosphorylation of the 3'-hydroxyl group of dephosphocoenzyme A to form coenzyme A. This Psychrobacter arcticus (strain DSM 17307 / VKM B-2377 / 273-4) protein is Dephospho-CoA kinase.